A 197-amino-acid polypeptide reads, in one-letter code: Imidazoleglycerol-phosphate dehydratase (197 aa).

It belongs to the imidazoleglycerol-phosphate dehydratase family.

Its subcellular location is the cytoplasm. The enzyme catalyses D-erythro-1-(imidazol-4-yl)glycerol 3-phosphate = 3-(imidazol-4-yl)-2-oxopropyl phosphate + H2O. It participates in amino-acid biosynthesis; L-histidine biosynthesis; L-histidine from 5-phospho-alpha-D-ribose 1-diphosphate: step 6/9. The chain is Imidazoleglycerol-phosphate dehydratase from Bradyrhizobium sp. (strain BTAi1 / ATCC BAA-1182).